Reading from the N-terminus, the 690-residue chain is Elongation factor G (690 aa).

The region spanning 8 to 283 (EDYRNFGIMA…AVVDYLPSPL (276 aa)) is the tr-type G domain. GTP-binding positions include 17 to 24 (AHIDAGKT), 81 to 85 (DTPGH), and 135 to 138 (NKMD).

This sequence belongs to the TRAFAC class translation factor GTPase superfamily. Classic translation factor GTPase family. EF-G/EF-2 subfamily.

Its subcellular location is the cytoplasm. Its function is as follows. Catalyzes the GTP-dependent ribosomal translocation step during translation elongation. During this step, the ribosome changes from the pre-translocational (PRE) to the post-translocational (POST) state as the newly formed A-site-bound peptidyl-tRNA and P-site-bound deacylated tRNA move to the P and E sites, respectively. Catalyzes the coordinated movement of the two tRNA molecules, the mRNA and conformational changes in the ribosome. The chain is Elongation factor G from Bradyrhizobium sp. (strain BTAi1 / ATCC BAA-1182).